The chain runs to 319 residues: Peroxidase 13 (319 aa).

The signal sequence occupies residues 1 to 22 (MITIALFLVLLYFHDQLGYSAA). Intrachain disulfides connect Cys33–Cys111, Cys66–Cys71, Cys117–Cys315, and Cys196–Cys222. Residue His64 is the Proton acceptor of the active site. Ca(2+) is bound by residues Asp65, Val68, Gly70, Asp72, and Ser74. Pro158 is a binding site for substrate. His189 contributes to the heme b binding site. Thr190 is a Ca(2+) binding site. Ca(2+) is bound by residues Asp235, Ser238, and Asp243. Asn280 is a glycosylation site (N-linked (GlcNAc...) asparagine).

This sequence belongs to the peroxidase family. Classical plant (class III) peroxidase subfamily. Heme b serves as cofactor. The cofactor is Ca(2+).

It localises to the secreted. It carries out the reaction 2 a phenolic donor + H2O2 = 2 a phenolic radical donor + 2 H2O. Its function is as follows. Removal of H(2)O(2), oxidation of toxic reductants, biosynthesis and degradation of lignin, suberization, auxin catabolism, response to environmental stresses such as wounding, pathogen attack and oxidative stress. These functions might be dependent on each isozyme/isoform in each plant tissue. The protein is Peroxidase 13 (PER13) of Arabidopsis thaliana (Mouse-ear cress).